The chain runs to 190 residues: Translation machinery-associated protein 22 (190 aa).

Residues 63 to 83 (LNVSGTKDSNAEEQPAKLTKE) are disordered. An SUI1 domain is found at 99–170 (VLIKTIERTK…DIFDFILEKF (72 aa)).

The protein belongs to the DENR family. Interacts with the 40S ribosomal subunit.

It localises to the cytoplasm. The polypeptide is Translation machinery-associated protein 22 (tma22) (Schizosaccharomyces pombe (strain 972 / ATCC 24843) (Fission yeast)).